The chain runs to 342 residues: N-acetyl-gamma-glutamyl-phosphate reductase (342 aa).

Residue Cys149 is part of the active site.

This sequence belongs to the NAGSA dehydrogenase family. Type 1 subfamily.

It is found in the cytoplasm. The catalysed reaction is N-acetyl-L-glutamate 5-semialdehyde + phosphate + NADP(+) = N-acetyl-L-glutamyl 5-phosphate + NADPH + H(+). It participates in amino-acid biosynthesis; L-arginine biosynthesis; N(2)-acetyl-L-ornithine from L-glutamate: step 3/4. Functionally, catalyzes the NADPH-dependent reduction of N-acetyl-5-glutamyl phosphate to yield N-acetyl-L-glutamate 5-semialdehyde. The polypeptide is N-acetyl-gamma-glutamyl-phosphate reductase (Cereibacter sphaeroides (strain ATCC 17025 / ATH 2.4.3) (Rhodobacter sphaeroides)).